We begin with the raw amino-acid sequence, 462 residues long: GTPase Der (462 aa).

2 EngA-type G domains span residues 9–171 and 201–372; these read KTIA…GLTK and IQVG…ECFS. GTP contacts are provided by residues 15–22, 62–66, 123–126, 207–214, 254–258, and 318–321; these read GQPNVGKS, DTGGM, NKID, GRVNVGKS, DTAGI, and NKWD. Residues 373–457 form the KH-like domain; that stretch reads KRIPTSLLNS…PLIINAKDKK (85 aa).

It belongs to the TRAFAC class TrmE-Era-EngA-EngB-Septin-like GTPase superfamily. EngA (Der) GTPase family. As to quaternary structure, associates with the 50S ribosomal subunit.

Its function is as follows. GTPase that plays an essential role in the late steps of ribosome biogenesis. This chain is GTPase Der, found in Helicobacter acinonychis (strain Sheeba).